Consider the following 541-residue polypeptide: Plasminogen-binding protein PgbB (541 aa).

Composition is skewed to basic and acidic residues over residues 420–434 (HKAK…ENKV) and 446–455 (VKTRRPEPTK). Positions 420–541 (HKAKENKQPL…RRKALEMNKK (122 aa)) are disordered. The span at 456 to 476 (DQNNAIQQGETKNNESKNTPI) shows a compositional bias: polar residues. Positions 480–541 (NAAKKEAPKP…RRKALEMNKK (62 aa)) are enriched in basic and acidic residues.

It is found in the cell surface. Functionally, binds plasminogen, specifically, and in a concentration and lysine-dependent manner. Plasminogen is the precursor of plasmin, a serine protease that cleaves fibrin, fibronectin, laminin and vitronectin. Acquisition of plasminogen/plasmin could enable H.pylori to degrade host components. The chain is Plasminogen-binding protein PgbB (pgbB) from Helicobacter pylori (strain J99 / ATCC 700824) (Campylobacter pylori J99).